A 792-amino-acid chain; its full sequence is DNA ligase (792 aa).

NAD(+) contacts are provided by residues 42–46 (DAEYD), 91–92 (SL), and Glu-124. The active-site N6-AMP-lysine intermediate is Lys-126. Arg-147, Glu-189, Lys-306, and Lys-330 together coordinate NAD(+). The Zn(2+) site is built by Cys-424, Cys-426, Cys-448, and Cys-454. Positions 714–792 (KTDTAVAGKT…EDEWLAMVGG (79 aa)) constitute a BRCT domain.

Belongs to the NAD-dependent DNA ligase family. LigA subfamily. It depends on Mg(2+) as a cofactor. Mn(2+) is required as a cofactor.

It catalyses the reaction NAD(+) + (deoxyribonucleotide)n-3'-hydroxyl + 5'-phospho-(deoxyribonucleotide)m = (deoxyribonucleotide)n+m + AMP + beta-nicotinamide D-nucleotide.. Its function is as follows. DNA ligase that catalyzes the formation of phosphodiester linkages between 5'-phosphoryl and 3'-hydroxyl groups in double-stranded DNA using NAD as a coenzyme and as the energy source for the reaction. It is essential for DNA replication and repair of damaged DNA. The polypeptide is DNA ligase (Caulobacter sp. (strain K31)).